The following is a 369-amino-acid chain: Adenosine 3'-phospho 5'-phosphosulfate transporter 2 (369 aa).

An N-linked (GlcNAc...) asparagine glycan is attached at Asn39. Helical transmembrane passes span 46-66 (LTQF…YGYL), 79-99 (YGWY…LIEL), 115-135 (MLIA…LGYL), 138-158 (PTQV…GVFI), 168-188 (VSAA…DSTI), and 191-211 (NFNL…AVIG). N-linked (GlcNAc...) asparagine glycosylation is present at Asn222. Helical transmembrane passes span 235–255 (IGFV…PAVA), 266–285 (GYAF…VLAL), 292–314 (LLAV…LFFA), and 317–337 (FTFQ…LNVY).

It belongs to the nucleotide-sugar transporter family. SLC35B subfamily.

The protein localises to the golgi apparatus membrane. It carries out the reaction 3'-phosphoadenylyl sulfate(in) + adenosine 3',5'-bisphosphate(out) = 3'-phosphoadenylyl sulfate(out) + adenosine 3',5'-bisphosphate(in). Probably functions as a 3'-phosphoadenylyl sulfate:adenosine 3',5'-bisphosphate antiporter at the Golgi membranes. Mediates the transport from the cytosol into the lumen of the Golgi of 3'-phosphoadenylyl sulfate/adenosine 3'-phospho 5'-phosphosulfate (PAPS), a universal sulfuryl donor for sulfation events that take place in that compartment. The sequence is that of Adenosine 3'-phospho 5'-phosphosulfate transporter 2 from Mus musculus (Mouse).